The chain runs to 191 residues: MSQTITLIKDKILSDNYFTLRNITYDLTRRNGEVIRHKREVYDRGNGATILLYNSTKKTVLLVRQFRVATWVNGNQDGMLIETCAGLLDNDEPEVCIRKEAIEETGYDVGEVRKIFELYMSPGGVTELIHFFIAEYHDSERASIGGGVEDEEIEVLELPFSRALEMVRSGEIRDGKTVLLLNYLQTSHLMD.

GDP-alpha-D-mannose-binding positions include tyrosine 17, 38–40 (KRE), arginine 67, and 85–87 (AGL). The Nudix hydrolase domain maps to 43-180 (DRGNGATILL…EIRDGKTVLL (138 aa)). 3 residues coordinate Mg(2+): alanine 85, glutamate 100, and glutamate 104. The Nudix box signature appears at 86–106 (GLLDNDEPEVCIRKEAIEETG). Residues glutamate 104, glutamate 127, 150 to 151 (DE), and lysine 176 each bind GDP-alpha-D-mannose. Glutamate 151 provides a ligand contact to Mg(2+).

It belongs to the Nudix hydrolase family. NudK subfamily. Homodimer. Requires Mg(2+) as cofactor.

The catalysed reaction is GDP-alpha-D-mannose + H2O = alpha-D-mannose 1-phosphate + GMP + 2 H(+). Its function is as follows. Nucleoside diphosphate sugar hydrolase that hydrolyzes GDP-mannose as its preferred substrate, yielding GMP and mannose-1-phosphate. The sequence is that of GDP-mannose pyrophosphatase (nudK) from Salmonella choleraesuis (strain SC-B67).